The chain runs to 110 residues: Dermcidin (110 aa).

The N-terminal stretch at 1–19 (MRFMTLLFLTALAGALVCA) is a signal peptide. Positions 24-70 (AASAPGSGNPCHEASAAQKENAGEDPGLARQAPKPRKQRSSLLEKGL) are disordered. Serine 30 and serine 38 each carry an O-linked (Xyl...) (chondroitin sulfate) serine glycan. The propeptide occupies 50 to 62 (GLARQAPKPRKQR). The helical transmembrane segment at 64–108 (SLLEKGLDGAKKAVGGLGKLGKDAVEDLESVGKGAVHDVKDVLDS) threads the bilayer. Glutamate 67 contributes to the Zn(2+) binding site. An N6-acetyllysine modification is found at lysine 68. 5 residues coordinate Zn(2+): aspartate 71, aspartate 86, aspartate 90, histidine 100, and aspartate 104. Residue leucine 110 is a propeptide.

Homohexamer. Mn(2+) is required as a cofactor. Zn(2+) serves as cofactor. In terms of tissue distribution, detected in urine (at protein level). Constitutively expressed in eccrine sweat gland cells (at protein level). Secreted into the sweat at a concentration of 1-10 micrograms/ml.

The protein localises to the secreted. It is found in the membrane. Its function is as follows. Found in sweat, has an antimicrobial activity during early bacterial colonization. The secreted peptide assembles into homohexameric complexes that can associate with and also insert into pathogen membranes. Once inserted in bacteria membranes forms anion channels probably altering the transmembrane potential essential for bacterial survival. Highly effective against E.coli, E.faecalis, S.aureus and C.albicans. Optimal pH and salt concentration resemble the conditions in sweat. Also exhibits proteolytic activity, cleaving on the C-terminal side of Arg and, to a lesser extent, Lys residues. Functionally, promotes survival of neurons and displays phosphatase activity. It may bind IgG. The protein is Dermcidin of Homo sapiens (Human).